The primary structure comprises 228 residues: Cytochrome b5 domain-containing protein 1 (228 aa).

The Cytochrome b5 heme-binding domain maps to arginine 17–histidine 83. The heme site is built by tyrosine 52 and histidine 83.

Belongs to the cytochrome b5 family.

It is found in the cytoplasm. The protein resides in the cytoskeleton. Its subcellular location is the cilium axoneme. Functionally, radial spoke stalk protein that binds heme under oxidizing conditions. Required for the coordinated beating of multiple cilia maybe by functioning in a redox signaling pathway. The protein is Cytochrome b5 domain-containing protein 1 of Homo sapiens (Human).